We begin with the raw amino-acid sequence, 160 residues long: ATP synthase subunit b (160 aa).

The helical transmembrane segment at 15–35 threads the bilayer; that stretch reads LAIVIGVLFWFLRGFLGGILE.

The protein belongs to the ATPase B chain family. F-type ATPases have 2 components, F(1) - the catalytic core - and F(0) - the membrane proton channel. F(1) has five subunits: alpha(3), beta(3), gamma(1), delta(1), epsilon(1). F(0) has four main subunits: a(1), b(1), b'(1) and c(10-14). The alpha and beta chains form an alternating ring which encloses part of the gamma chain. F(1) is attached to F(0) by a central stalk formed by the gamma and epsilon chains, while a peripheral stalk is formed by the delta, b and b' chains.

It is found in the cellular thylakoid membrane. In terms of biological role, f(1)F(0) ATP synthase produces ATP from ADP in the presence of a proton or sodium gradient. F-type ATPases consist of two structural domains, F(1) containing the extramembraneous catalytic core and F(0) containing the membrane proton channel, linked together by a central stalk and a peripheral stalk. During catalysis, ATP synthesis in the catalytic domain of F(1) is coupled via a rotary mechanism of the central stalk subunits to proton translocation. Component of the F(0) channel, it forms part of the peripheral stalk, linking F(1) to F(0). This is ATP synthase subunit b from Synechococcus sp. (strain CC9902).